An 89-amino-acid chain; its full sequence is MAKKSKIAKEKKRQQLVLKYAELRKELKEQGDYEALRKLPRDSSPTRLKNRCELTGRPRGYLRKFKMSRIAFRELAYKGHIPGVKKSSW.

Belongs to the universal ribosomal protein uS14 family. Part of the 30S ribosomal subunit. Contacts proteins S3 and S10.

Functionally, binds 16S rRNA, required for the assembly of 30S particles and may also be responsible for determining the conformation of the 16S rRNA at the A site. The polypeptide is Small ribosomal subunit protein uS14A (Bacillus pumilus (strain SAFR-032)).